A 2335-amino-acid chain; its full sequence is Serine/threonine-protein kinase tor1 (2335 aa).

15 HEAT repeats span residues 1–31 (MEYFSDLKNKNESIQLAAADQLKEFVHSSTK), 164–201 (LYISEIFQNLWTGLRDPKPLIRETAADALGASLDVVCQ), 331–371 (PYLQ…AVKL), 410–449 (PIQERLLNMVSQILTGKNFEIRTNDTYTPSFTNIYSAREP), 474–512 (YSLISFIQESVLSYLENDNSEIRIAAARTCCQVFARDPI), 522–560 (ESVAEVLEKLLTLGIADSDPKIRETVLSLLDERFDRHLA), 562–596 (PDNIRCLFIALNDEVFSIREIAIIIIGRLALYNPA), 642–679 (PYIQSIIHVILPKAADTSPGVSSAIISALGELASVEGE), 684–722 (DVRGSFMKLILVNLQDQSSTLKRLASLKCLRKLCGRSGY), 728–766 (LDYPPLLGALIGILQSEQPTPIRREVLRTLGVLGALDPY), 843–880 (VFLPQVVPTFLQVMQSLSASSAEFYFQQLTTLTSIIGP), 904–923 (LLVILELIDAIAIALQDEFK), 924–961 (FYLPQILSCMLKAFSLDNTSSRSVSYKVLQSFVIFGSN), 964–1003 (EYMHLVLPVIIRSFERDTIPLGFRKSALKCIAQLFQSVNF), and 1005–1042 (DHASRIIHPLVRMLGKSNGDLRAVIMDTLCAIVSQLGY). Residues 1226–1781 (VISAHASKCN…VYSLTVSSKS (556 aa)) form the FAT domain. The PI3K/PI4K catalytic domain occupies 1955-2269 (FHHTFEVISS…ARHADYAALS (315 aa)). The G-loop stretch occupies residues 1961-1967 (VISSKQR). Position 1972 is a phosphothreonine; by PKB/AKT1 (threonine 1972). A catalytic loop region spans residues 2134-2142 (GLGDRHPSN). The segment at 2154 to 2179 (HIDFGDCFEVAMHREKFPEKIPFRLT) is activation loop. Residues 2303 to 2335 (EQLPVKAQVEKLIQQATAPENLCRCYVGWCSFW) enclose the FATC domain.

The protein belongs to the PI3/PI4-kinase family. In terms of assembly, the target of rapamycin complex 2 (TORC2) is composed of at least bit61, pop3/wat1, sin1, ste20 and tor1. Phosphorylation at Thr-1972 in the ATP-binding region by AKT1 strongly reduces kinase activity.

The protein localises to the cytoplasm. It catalyses the reaction L-seryl-[protein] + ATP = O-phospho-L-seryl-[protein] + ADP + H(+). The catalysed reaction is L-threonyl-[protein] + ATP = O-phospho-L-threonyl-[protein] + ADP + H(+). In terms of biological role, catalytic component of TORC2, which regulates multiple cellular processes to control cell growth in response to environmental signals. In response to signals, TORC2 phosphorylates AGC protein kinase family members. TORC2 is required for cell survival under various stress conditions. TORC2 positively controls G1 cell-cycle arrest, sexual development and amino acid uptake. Positively regulates amino acid uptake through the control of expression of amino acid permeases. Responsible for the phosphorylation of AGC kinase gad8 at 'Ser-527' and 'Ser-546', activating gad8 kinase activity and promoting sexual development. The polypeptide is Serine/threonine-protein kinase tor1 (Schizosaccharomyces pombe (strain 972 / ATCC 24843) (Fission yeast)).